We begin with the raw amino-acid sequence, 154 residues long: Urease accessory protein UreE (154 aa).

This sequence belongs to the UreE family.

It localises to the cytoplasm. In terms of biological role, involved in urease metallocenter assembly. Binds nickel. Probably functions as a nickel donor during metallocenter assembly. This Prochlorococcus marinus subsp. pastoris (strain CCMP1986 / NIES-2087 / MED4) protein is Urease accessory protein UreE.